The chain runs to 406 residues: Tryptophan synthase beta chain (406 aa).

K95 is modified (N6-(pyridoxal phosphate)lysine).

It belongs to the TrpB family. As to quaternary structure, tetramer of two alpha and two beta chains. It depends on pyridoxal 5'-phosphate as a cofactor.

The catalysed reaction is (1S,2R)-1-C-(indol-3-yl)glycerol 3-phosphate + L-serine = D-glyceraldehyde 3-phosphate + L-tryptophan + H2O. It participates in amino-acid biosynthesis; L-tryptophan biosynthesis; L-tryptophan from chorismate: step 5/5. Its function is as follows. The beta subunit is responsible for the synthesis of L-tryptophan from indole and L-serine. The polypeptide is Tryptophan synthase beta chain (Azotobacter vinelandii (strain DJ / ATCC BAA-1303)).